A 407-amino-acid chain; its full sequence is Putative F-box protein At5g60560 (407 aa).

Positions 2 to 49 (TMMSDLSEDLVEEILCRVSITSLGAVRSTCKGWYVLSKTRVLCKAETK) constitute an F-box domain.

This is Putative F-box protein At5g60560 from Arabidopsis thaliana (Mouse-ear cress).